We begin with the raw amino-acid sequence, 104 residues long: Large ribosomal subunit protein uL24 (104 aa).

Belongs to the universal ribosomal protein uL24 family. In terms of assembly, part of the 50S ribosomal subunit.

In terms of biological role, one of two assembly initiator proteins, it binds directly to the 5'-end of the 23S rRNA, where it nucleates assembly of the 50S subunit. Functionally, one of the proteins that surrounds the polypeptide exit tunnel on the outside of the subunit. The sequence is that of Large ribosomal subunit protein uL24 from Pectobacterium carotovorum subsp. carotovorum (strain PC1).